We begin with the raw amino-acid sequence, 393 residues long: tRNA(Met) cytidine acetate ligase (393 aa).

Residues Gly81, Asn142, and Arg167 each contribute to the ATP site.

This sequence belongs to the TmcAL family.

It localises to the cytoplasm. It carries out the reaction cytidine(34) in elongator tRNA(Met) + acetate + ATP = N(4)-acetylcytidine(34) in elongator tRNA(Met) + AMP + diphosphate. Its function is as follows. Catalyzes the formation of N(4)-acetylcytidine (ac(4)C) at the wobble position of elongator tRNA(Met), using acetate and ATP as substrates. First activates an acetate ion to form acetyladenylate (Ac-AMP) and then transfers the acetyl group to tRNA to form ac(4)C34. This is tRNA(Met) cytidine acetate ligase from Bacillus cereus (strain AH187).